Here is a 99-residue protein sequence, read N- to C-terminus: Large ribosomal subunit protein uL23 (99 aa).

The protein belongs to the universal ribosomal protein uL23 family. In terms of assembly, part of the 50S ribosomal subunit. Contacts protein L29, and trigger factor when it is bound to the ribosome.

Functionally, one of the early assembly proteins it binds 23S rRNA. One of the proteins that surrounds the polypeptide exit tunnel on the outside of the ribosome. Forms the main docking site for trigger factor binding to the ribosome. The polypeptide is Large ribosomal subunit protein uL23 (Saccharopolyspora erythraea (strain ATCC 11635 / DSM 40517 / JCM 4748 / NBRC 13426 / NCIMB 8594 / NRRL 2338)).